The chain runs to 387 residues: Structural protein ORF387 (387 aa).

Residues 315-387 adopt a coiled-coil conformation; the sequence is KTFQEMVKVA…EEKNNTVKLS (73 aa). A disordered region spans residues 365–387; the sequence is LTEEQQQQNETEEEEKNNTVKLS.

It localises to the virion. This chain is Structural protein ORF387, found in Acidianus convivator (ATV).